We begin with the raw amino-acid sequence, 215 residues long: Adenylate kinase (215 aa).

10–15 (GAGKGT) serves as a coordination point for ATP. Positions 30 to 59 (STGDILRDAVSKGTELGKMAKAIMDRGELV) are NMP. AMP contacts are provided by residues Thr31, Arg36, 57-59 (ELV), 82-85 (GYPR), and Gln89. An LID region spans residues 123–160 (NRRVCPNCGKVYNLITLQPKEDEKCDVCGTKLIQRDDD). Arg124 contacts ATP. 2 residues coordinate Zn(2+): Cys127 and Cys130. 133-134 (VY) serves as a coordination point for ATP. Residues Cys147 and Cys150 each coordinate Zn(2+). AMP is bound by residues Arg157 and Arg168. ATP is bound at residue Gln196.

This sequence belongs to the adenylate kinase family. As to quaternary structure, monomer.

Its subcellular location is the cytoplasm. The enzyme catalyses AMP + ATP = 2 ADP. The protein operates within purine metabolism; AMP biosynthesis via salvage pathway; AMP from ADP: step 1/1. Functionally, catalyzes the reversible transfer of the terminal phosphate group between ATP and AMP. Plays an important role in cellular energy homeostasis and in adenine nucleotide metabolism. The sequence is that of Adenylate kinase from Petrotoga mobilis (strain DSM 10674 / SJ95).